Reading from the N-terminus, the 271-residue chain is Energy-coupling factor transporter ATP-binding protein EcfA (271 aa).

The region spanning 2–231 (ISIQNLTFYY…PLFLQQYKLN (230 aa)) is the ABC transporter domain. 34–41 (GHNGSGKS) contributes to the ATP binding site.

Belongs to the ABC transporter superfamily. Energy-coupling factor EcfA family. In terms of assembly, forms a stable energy-coupling factor (ECF) transporter complex composed of 2 membrane-embedded substrate-binding proteins (S component), 2 ATP-binding proteins (A component) and 2 transmembrane proteins (T component).

The protein resides in the cell membrane. Its function is as follows. ATP-binding (A) component of a common energy-coupling factor (ECF) ABC-transporter complex. Unlike classic ABC transporters this ECF transporter provides the energy necessary to transport a number of different substrates. In Onion yellows phytoplasma (strain OY-M), this protein is Energy-coupling factor transporter ATP-binding protein EcfA.